Consider the following 367-residue polypeptide: Aurora kinase (367 aa).

A disordered region spans residues 30–49; it reads TTATNGAPPQARVQPGKGYR. Positions 109 to 360 constitute a Protein kinase domain; it reads FEIGKVLGKG…LKEVKKHPWI (252 aa). ATP-binding positions include 115-123 and Lys138; that span reads LGKGKFGRV. The active-site Proton acceptor is the Asp232.

Belongs to the protein kinase superfamily. Ser/Thr protein kinase family. Aurora subfamily.

The protein localises to the nucleus. It is found in the cytoplasm. It localises to the cytoskeleton. Its subcellular location is the spindle. The protein resides in the chromosome. The protein localises to the centromere. It is found in the kinetochore. It carries out the reaction L-seryl-[protein] + ATP = O-phospho-L-seryl-[protein] + ADP + H(+). It catalyses the reaction L-threonyl-[protein] + ATP = O-phospho-L-threonyl-[protein] + ADP + H(+). Component of the chromosomal passenger complex (CPC), a complex that acts as a key regulator of chromosome segregation and cytokinesis. Has a role in error-correction of aberrent kinetochore-microtubule attachments to ensure that sister kinetochores become bioriented and connect to opposite poles by promoting spindle assembly checkpoint signaling. The sequence is that of Aurora kinase (IPL1) from Eremothecium gossypii (strain ATCC 10895 / CBS 109.51 / FGSC 9923 / NRRL Y-1056) (Yeast).